Consider the following 393-residue polypeptide: S-adenosylmethionine synthase (393 aa).

An ATP-binding site is contributed by histidine 17. Residue aspartate 19 coordinates Mg(2+). A K(+)-binding site is contributed by glutamate 45. Positions 58 and 106 each coordinate L-methionine. The flexible loop stretch occupies residues 106–116; sequence QSAHIAQGVNA. ATP-binding positions include 171-173, 237-238, aspartate 246, 252-253, alanine 269, and lysine 273; these read DAK, KF, and RK. Aspartate 246 is an L-methionine binding site. Residue lysine 277 participates in L-methionine binding.

It belongs to the AdoMet synthase family. In terms of assembly, homotetramer; dimer of dimers. The cofactor is Mg(2+). K(+) serves as cofactor.

It is found in the cytoplasm. It carries out the reaction L-methionine + ATP + H2O = S-adenosyl-L-methionine + phosphate + diphosphate. It functions in the pathway amino-acid biosynthesis; S-adenosyl-L-methionine biosynthesis; S-adenosyl-L-methionine from L-methionine: step 1/1. In terms of biological role, catalyzes the formation of S-adenosylmethionine (AdoMet) from methionine and ATP. The overall synthetic reaction is composed of two sequential steps, AdoMet formation and the subsequent tripolyphosphate hydrolysis which occurs prior to release of AdoMet from the enzyme. The sequence is that of S-adenosylmethionine synthase from Ruegeria pomeroyi (strain ATCC 700808 / DSM 15171 / DSS-3) (Silicibacter pomeroyi).